The sequence spans 230 residues: MKEERPIIALDFSSFEETKAFLDLFPAEEKLYVKIGMELYYAQGPDIVRYIKSLGHNVFLDLKLHDIPNTVRAAMAVLKELDIDMATVHAAGGVEMLKAAREGLGQDPTLIAVTQLTSTSEDQMRGDQNIQTSLLESVLHYSKGAAKAQLDGVVCSAQEVEAIKAVTPTGFTCLTPGIRPKGSNIGDQKRVMTPNQARRIESDYIVVGRPITQAKDPVAAYQAIKAEWAG.

Substrate is bound by residues aspartate 11, lysine 34, 61–70 (DLKLHDIPNT), threonine 117, arginine 179, glutamine 188, glycine 208, and arginine 209. Residue lysine 63 is the Proton donor of the active site.

This sequence belongs to the OMP decarboxylase family. Type 1 subfamily. As to quaternary structure, homodimer.

The catalysed reaction is orotidine 5'-phosphate + H(+) = UMP + CO2. Its pathway is pyrimidine metabolism; UMP biosynthesis via de novo pathway; UMP from orotate: step 2/2. Catalyzes the decarboxylation of orotidine 5'-monophosphate (OMP) to uridine 5'-monophosphate (UMP). This is Orotidine 5'-phosphate decarboxylase from Streptococcus pyogenes serotype M18 (strain MGAS8232).